The chain runs to 160 residues: CXXC motif containing zinc binding protein (160 aa).

Zn(2+)-binding residues include C33, C36, C67, and C70. A Phosphoserine modification is found at S75.

This sequence belongs to the UPF0587 family. As to quaternary structure, monomer.

The polypeptide is CXXC motif containing zinc binding protein (Homo sapiens (Human)).